Here is a 171-residue protein sequence, read N- to C-terminus: Tetratricopeptide repeat protein 9C (171 aa).

TPR repeat units follow at residues 8–41 (AQLY…LRGL), 72–107 (TDCY…QPEN), and 108–141 (AKAL…QPKD).

This sequence belongs to the TTC9 family.

The chain is Tetratricopeptide repeat protein 9C (Ttc9c) from Rattus norvegicus (Rat).